The primary structure comprises 306 residues: Mitochondrial basic amino acids transporter (306 aa).

A run of 6 helical transmembrane segments spans residues 2–22, 61–81, 96–116, 153–172, 187–207, and 255–275; these read ALDFLAGCAGGVAGVIVGHPF, GLGSPLMGLTFINALVFGVQG, FLAGAAAGAIQCVICCPMELA, GMVSTLLRETPSFGVYFLTY, LLVPKLLLAGGTSGITSWLST, and LLRAFPVNAATFATVTVVLTY. 3 Solcar repeats span residues 2 to 86, 90 to 178, and 190 to 275; these read ALDF…TLRA, DSPL…LTRA, and PKLL…VLTY. Positions 283 to 306 are disordered; that stretch reads VDSEAAPGASTTPAGPALAQPSSL. Over residues 287–306 the composition is skewed to low complexity; it reads AAPGASTTPAGPALAQPSSL.

The protein belongs to the mitochondrial carrier (TC 2.A.29) family.

It is found in the mitochondrion inner membrane. The enzyme catalyses L-lysine(out) + L-arginine(in) = L-lysine(in) + L-arginine(out). It carries out the reaction L-histidine(out) + L-arginine(in) = L-histidine(in) + L-arginine(out). It catalyses the reaction L-ornithine(in) + L-arginine(out) = L-ornithine(out) + L-arginine(in). The catalysed reaction is L-homoarginine(in) + L-arginine(out) = L-homoarginine(out) + L-arginine(in). The enzyme catalyses N(omega)-methyl-L-arginine(in) + L-arginine(out) = N(omega)-methyl-L-arginine(out) + L-arginine(in). It carries out the reaction L-arginine(in) = L-arginine(out). It catalyses the reaction L-lysine(in) = L-lysine(out). The catalysed reaction is L-ornithine(in) = L-ornithine(out). The enzyme catalyses L-histidine(out) = L-histidine(in). Functionally, mitochondrial transporter of arginine, lysine, homoarginine, methylarginine and, to a much lesser extent, ornithine and histidine. Does not transport carnitine nor acylcarnitines. Functions by both counter-exchange and uniport mechanisms. Plays a physiological role in the import of basic amino acids into mitochondria for mitochondrial protein synthesis and amino acid degradation. This chain is Mitochondrial basic amino acids transporter (Slc25a29), found in Rattus norvegicus (Rat).